Here is a 93-residue protein sequence, read N- to C-terminus: Integration host factor subunit beta (93 aa).

The protein belongs to the bacterial histone-like protein family. Heterodimer of an alpha and a beta chain.

In terms of biological role, this protein is one of the two subunits of integration host factor, a specific DNA-binding protein that functions in genetic recombination as well as in transcriptional and translational control. The chain is Integration host factor subunit beta (ihfB) from Cereibacter sphaeroides (strain ATCC 17023 / DSM 158 / JCM 6121 / CCUG 31486 / LMG 2827 / NBRC 12203 / NCIMB 8253 / ATH 2.4.1.) (Rhodobacter sphaeroides).